A 275-amino-acid chain; its full sequence is UPF0328 protein ECU05_0050 (275 aa).

Belongs to the UPF0328 family.

The protein is UPF0328 protein ECU05_0050 of Encephalitozoon cuniculi (strain GB-M1) (Microsporidian parasite).